The sequence spans 232 residues: tRNA1(Val) (adenine(37)-N6)-methyltransferase (232 aa).

The protein belongs to the methyltransferase superfamily. tRNA (adenine-N(6)-)-methyltransferase family.

It localises to the cytoplasm. The enzyme catalyses adenosine(37) in tRNA1(Val) + S-adenosyl-L-methionine = N(6)-methyladenosine(37) in tRNA1(Val) + S-adenosyl-L-homocysteine + H(+). In terms of biological role, specifically methylates the adenine in position 37 of tRNA(1)(Val) (anticodon cmo5UAC). The polypeptide is tRNA1(Val) (adenine(37)-N6)-methyltransferase (Haemophilus influenzae (strain PittEE)).